We begin with the raw amino-acid sequence, 441 residues long: Ribulose bisphosphate carboxylase large chain (441 aa).

Asn89 and Thr139 together coordinate substrate. Lys141 acts as the Proton acceptor in catalysis. Lys143 is a binding site for substrate. Lys167, Asp169, and Glu170 together coordinate Mg(2+). Lys167 carries the post-translational modification N6-carboxylysine. His260 (proton acceptor) is an active-site residue. 3 residues coordinate substrate: Arg261, His293, and Ser345.

This sequence belongs to the RuBisCO large chain family. Type I subfamily. Heterohexadecamer of 8 large chains and 8 small chains; disulfide-linked. The disulfide link is formed within the large subunit homodimers. Mg(2+) is required as a cofactor. The disulfide bond which can form in the large chain dimeric partners within the hexadecamer appears to be associated with oxidative stress and protein turnover.

The protein resides in the plastid. Its subcellular location is the chloroplast. The catalysed reaction is 2 (2R)-3-phosphoglycerate + 2 H(+) = D-ribulose 1,5-bisphosphate + CO2 + H2O. It carries out the reaction D-ribulose 1,5-bisphosphate + O2 = 2-phosphoglycolate + (2R)-3-phosphoglycerate + 2 H(+). Functionally, ruBisCO catalyzes two reactions: the carboxylation of D-ribulose 1,5-bisphosphate, the primary event in carbon dioxide fixation, as well as the oxidative fragmentation of the pentose substrate in the photorespiration process. Both reactions occur simultaneously and in competition at the same active site. The sequence is that of Ribulose bisphosphate carboxylase large chain from Viola sororia (Woolly blue violet).